A 141-amino-acid polypeptide reads, in one-letter code: Nucleoside diphosphate kinase (141 aa).

ATP-binding residues include K11, F59, R87, T93, R104, and N114. The Pros-phosphohistidine intermediate role is filled by H117.

The protein belongs to the NDK family. Homotetramer. Mg(2+) is required as a cofactor.

The protein resides in the cytoplasm. The enzyme catalyses a 2'-deoxyribonucleoside 5'-diphosphate + ATP = a 2'-deoxyribonucleoside 5'-triphosphate + ADP. It catalyses the reaction a ribonucleoside 5'-diphosphate + ATP = a ribonucleoside 5'-triphosphate + ADP. Major role in the synthesis of nucleoside triphosphates other than ATP. The ATP gamma phosphate is transferred to the NDP beta phosphate via a ping-pong mechanism, using a phosphorylated active-site intermediate. This Polynucleobacter necessarius subsp. necessarius (strain STIR1) protein is Nucleoside diphosphate kinase.